Consider the following 281-residue polypeptide: Undecaprenyl-diphosphatase (281 aa).

Transmembrane regions (helical) follow at residues 4–24 (ILLL…FLPI), 46–63 (AFEV…CWEF), 83–103 (FVLN…LFGK), 108–128 (VLFS…IIFW), 187–207 (AVAT…ATAY), 222–242 (EFTL…FVCV), and 257–277 (FAWY…TGLI).

It belongs to the UppP family.

Its subcellular location is the cell inner membrane. The enzyme catalyses di-trans,octa-cis-undecaprenyl diphosphate + H2O = di-trans,octa-cis-undecaprenyl phosphate + phosphate + H(+). Functionally, catalyzes the dephosphorylation of undecaprenyl diphosphate (UPP). Confers resistance to bacitracin. This is Undecaprenyl-diphosphatase from Polynucleobacter necessarius subsp. necessarius (strain STIR1).